The sequence spans 112 residues: Colipase (112 aa).

A signal peptide spans Met1–Ala17. The propeptide at Ala18–Arg22 is enterostatin, activation peptide. 5 disulfides stabilise this stretch: Cys34/Cys45, Cys40/Cys56, Cys44/Cys78, Cys66/Cys86, and Cys80/Cys104.

It belongs to the colipase family. Forms a 1:1 stoichiometric complex with pancreatic lipase. In terms of tissue distribution, expressed by the pancreas.

The protein resides in the secreted. Its function is as follows. Colipase is a cofactor of pancreatic lipase. It allows the lipase to anchor itself to the lipid-water interface. Without colipase the enzyme is washed off by bile salts, which have an inhibitory effect on the lipase. Enterostatin has a biological activity as a satiety signal. The polypeptide is Colipase (Homo sapiens (Human)).